A 172-amino-acid chain; its full sequence is Biogenesis of lysosome-related organelles complex 1 subunit 6 (172 aa).

Over residues 1–10 the composition is skewed to pro residues; it reads MNVPVPPPPD. 2 disordered regions span residues 1 to 35 and 136 to 172; these read MNVPVPPPPDGVLTGPSDSLEAGEPTPGLSDRSPD and ALKLQQQRQKEELEREQQREREFEREKQLTAKPAKRT. A compositionally biased stretch (basic and acidic residues) spans 143–164; sequence RQKEELEREQQREREFEREKQL.

The protein belongs to the BLOC1S6 family. In terms of assembly, homodimer. Octamer composed of one copy each BLOC1S1, BLOC1S2, BLOC1S3, BLOC1S4, BLOC1S5, BLOC1S6, DTNBP1/BLOC1S7 and SNAPIN/BLOC1S8. The BLOC-1 complex associates with the AP-3 protein complex and membrane protein cargos. Interacts with BLOC1S4, BLOC1S5, DTNBP1/BLOC1S7, F-actin, SNAP25 isoform 1 and isoform 2, SNAP47 and STX12. Component of the biogenesis of lysosome-related organelles complex 1 (BLOC-1) composed of BLOC1S1, BLOC1S2, BLOC1S3, BLOC1S4, BLOC1S5, BLOC1S6, DTNBP1/BLOC1S7 and SNAPIN/BLOC1S8.

Its subcellular location is the cytoplasm. The protein resides in the membrane. Functionally, component of the BLOC-1 complex, a complex that is required for normal biogenesis of lysosome-related organelles (LRO), such as platelet dense granules and melanosomes. In concert with the AP-3 complex, the BLOC-1 complex is required to target membrane protein cargos into vesicles assembled at cell bodies for delivery into neurites and nerve terminals. The BLOC-1 complex, in association with SNARE proteins, is also proposed to be involved in neurite extension. May play a role in intracellular vesicle trafficking, particularly in the vesicle-docking and fusion process. The chain is Biogenesis of lysosome-related organelles complex 1 subunit 6 (Bloc1s6) from Rattus norvegicus (Rat).